Here is a 938-residue protein sequence, read N- to C-terminus: TFIIH basal transcription factor complex helicase/translocase XPB subunit (938 aa).

Residues Phe394 to Leu562 form the Helicase ATP-binding domain. Residue Leu407–Thr414 participates in ATP binding. Positions Asp515–His518 match the DEVH box motif. A Helicase C-terminal domain is found at Trp627–Val781.

This sequence belongs to the helicase family. RAD25/XPB subfamily. In terms of assembly, component of the 7-subunit TFIIH core complex composed of XPB, XPD, SSL1, TFB1, TFB2, TFB4 and TFB5.

The catalysed reaction is Couples ATP hydrolysis with the unwinding of duplex DNA by translocating in the 3'-5' direction.. The enzyme catalyses ATP + H2O = ADP + phosphate + H(+). In terms of biological role, ATP-dependent 3'-5' DNA helicase/translocase; binds dsDNA rather than ssDNA, unzipping it in a translocase rather than classical helicase activity. Component of the general transcription factor IIH (TFIIH) core complex, involved in spliced leader RNA (SL RNA) gene transcription by RNA polymerase II. TFIIH has an essential role in transcription initiation. When the pre-initiation complex (PIC) has been established, TFIIH is required for promoter opening and promoter escape. The ATPase activity of XPB is required for promoter opening and promoter escape. The protein is TFIIH basal transcription factor complex helicase/translocase XPB subunit of Trypanosoma brucei brucei (strain 927/4 GUTat10.1).